The following is a 631-amino-acid chain: Acurin A biosynthesis cluster transcription regulator (631 aa).

Residues 1 to 11 (MSPNMSLTASH) show a composition bias toward polar residues. The interval 1 to 28 (MSPNMSLTASHPQQPQPTPQSKAQLTRQ) is disordered. A DNA-binding region (zn(2)-C6 fungal-type) is located at residues 30–62 (CNRCHASKLKCLRPPGVTTSKSCIRCIKADTEC). 3 disordered regions span residues 64–141 (YDPP…PDNR), 489–522 (CSSS…HPAT), and 536–573 (HSSS…YPTP). The segment covering 88-99 (IEAREPEVTDPR) has biased composition (basic and acidic residues). Polar residues predominate over residues 119-128 (NGSLAPSSAA).

It localises to the nucleus. In terms of biological role, transcription factor that positively regulates the expression of the cluster that mediates the biosynthesis of acurin A, a highly reduced polyketide coupled to a serine via a peptide bond. This chain is Acurin A biosynthesis cluster transcription regulator, found in Aspergillus aculeatus (strain ATCC 16872 / CBS 172.66 / WB 5094).